The sequence spans 351 residues: Alternative oxidase, mitochondrial (351 aa).

The chain crosses the membrane as a helical span at residues 147–167 (LTRFIFLESVAGVPGMVGGML). 3 residues coordinate Fe cation: E154, E193, and H196. The chain crosses the membrane as a helical span at residues 212-232 (LMVLGAQGVFFNGFFLSYLMS). Residues E244, E245, E299, and H302 each coordinate Fe cation. A disordered region spans residues 322–351 (AAKYKDPTKAHPNKGIADLKPTGWEREEVI).

It belongs to the alternative oxidase family. The cofactor is Fe cation.

The protein localises to the mitochondrion inner membrane. Its function is as follows. Catalyzes cyanide-resistant oxygen consumption. May increase respiration when the cytochrome respiratory pathway is restricted, or in response to low temperatures. The sequence is that of Alternative oxidase, mitochondrial (aox1) from Aspergillus niger.